We begin with the raw amino-acid sequence, 1106 residues long: Protein translocase subunit SecA (1106 aa).

ATP is bound by residues Gln175, 193 to 197 (GEGKT), and Asp694. The disordered stretch occupies residues 1021 to 1106 (QEAPADEQQP…KYKNCHGQNA (86 aa)). The span at 1042 to 1056 (QRQDMSKYREQKQDL) shows a compositional bias: basic and acidic residues. Residues 1057–1067 (SDPNQQAAASQ) are compositionally biased toward polar residues. The segment covering 1068–1085 (DTREQQKREPIRAEKTVG) has biased composition (basic and acidic residues). Residues Cys1090, Cys1092, Cys1101, and His1102 each coordinate Zn(2+).

Belongs to the SecA family. As to quaternary structure, monomer and homodimer. Part of the essential Sec protein translocation apparatus which comprises SecA, SecYEG and auxiliary proteins SecDF. Other proteins may also be involved. Zn(2+) serves as cofactor.

The protein localises to the cell inner membrane. Its subcellular location is the cytoplasm. It carries out the reaction ATP + H2O + cellular proteinSide 1 = ADP + phosphate + cellular proteinSide 2.. Functionally, part of the Sec protein translocase complex. Interacts with the SecYEG preprotein conducting channel. Has a central role in coupling the hydrolysis of ATP to the transfer of proteins into and across the cell membrane, serving as an ATP-driven molecular motor driving the stepwise translocation of polypeptide chains across the membrane. This is Protein translocase subunit SecA from Bacteroides thetaiotaomicron (strain ATCC 29148 / DSM 2079 / JCM 5827 / CCUG 10774 / NCTC 10582 / VPI-5482 / E50).